The chain runs to 192 residues: Pyridoxal 5'-phosphate synthase subunit PdxT (192 aa).

Position 46-48 (46-48 (GES)) interacts with L-glutamine. Catalysis depends on Cys-77, which acts as the Nucleophile. L-glutamine contacts are provided by residues Arg-103 and 131 to 132 (IR). Active-site charge relay system residues include His-167 and Glu-169.

The protein belongs to the glutaminase PdxT/SNO family. In terms of assembly, in the presence of PdxS, forms a dodecamer of heterodimers. Only shows activity in the heterodimer.

It catalyses the reaction aldehydo-D-ribose 5-phosphate + D-glyceraldehyde 3-phosphate + L-glutamine = pyridoxal 5'-phosphate + L-glutamate + phosphate + 3 H2O + H(+). The catalysed reaction is L-glutamine + H2O = L-glutamate + NH4(+). Its pathway is cofactor biosynthesis; pyridoxal 5'-phosphate biosynthesis. Functionally, catalyzes the hydrolysis of glutamine to glutamate and ammonia as part of the biosynthesis of pyridoxal 5'-phosphate. The resulting ammonia molecule is channeled to the active site of PdxS. The chain is Pyridoxal 5'-phosphate synthase subunit PdxT from Exiguobacterium sibiricum (strain DSM 17290 / CCUG 55495 / CIP 109462 / JCM 13490 / 255-15).